The following is an 881-amino-acid chain: Formin-like protein 10 (881 aa).

The first 24 residues, 1–24 (MAMKRVVFLLLLVAASALVKSSRG), serve as a signal peptide directing secretion. The segment at 194–223 (LTPSNSLNMEPPSPYYPSKSAHKHQGVAPP) is disordered. A helical transmembrane segment spans residues 236-256 (VVLIAVLPTAALSFLAAFLCF). The segment covering 333 to 346 (TLVTGGTQENNATS) has biased composition (polar residues). 3 disordered regions span residues 333 to 427 (TLVT…EVNA), 683 to 703 (ENGRSPPFPSTSDDNSNESLQ), and 837 to 881 (ASQK…DSND). The segment covering 351 to 390 (LMPPPPPPPPPPPPPPPPPPPRPPPPPPPIKKGAPPPAPP) has biased composition (pro residues). Residues 400–424 (LSPTESSRSEESSASELASESSETE) are compositionally biased toward low complexity. One can recognise an FH2 domain in the interval 422-854 (ETEVNAPRAK…KSQANGNSNN (433 aa)). A compositionally biased stretch (polar residues) spans 692–701 (STSDDNSNES). Residues 846–865 (SQANGNSNNPSSQSNPQEQQ) are compositionally biased toward low complexity. The span at 870–881 (LDHHFDSSDSND) shows a compositional bias: basic and acidic residues.

The protein belongs to the formin-like family. Class-I subfamily.

The protein localises to the membrane. This chain is Formin-like protein 10 (FH10), found in Oryza sativa subsp. japonica (Rice).